Reading from the N-terminus, the 119-residue chain is Immunoglobulin heavy variable 2-26 (119 aa).

The signal sequence occupies residues 1-19; it reads MDTLCYTLLLLTTPSWVLS. Gln-20 is modified (pyrrolidone carboxylic acid). A framework-1 region spans residues 20–44; that stretch reads QVTLKESGPVLVKPTETLTLTCTVS. The Ig-like domain maps to 20–119; that stretch reads QVTLKESGPV…DTATYYCARI (100 aa). A disulfide bond links Cys-41 and Cys-116. The complementarity-determining-1 stretch occupies residues 45-54; that stretch reads GFSLSNARMG. Residues 55–71 are framework-2; that stretch reads VSWIRQPPGKALEWLAH. Positions 72 to 78 are complementarity-determining-2; sequence IFSNDEK. A framework-3 region spans residues 79–116; it reads SYSTSLKSRLTISKDTSKSQVVLTMTNMDPVDTATYYC. The complementarity-determining-3 stretch occupies residues 117-119; that stretch reads ARI.

In terms of assembly, immunoglobulins are composed of two identical heavy chains and two identical light chains; disulfide-linked.

The protein localises to the secreted. Its subcellular location is the cell membrane. V region of the variable domain of immunoglobulin heavy chains that participates in the antigen recognition. Immunoglobulins, also known as antibodies, are membrane-bound or secreted glycoproteins produced by B lymphocytes. In the recognition phase of humoral immunity, the membrane-bound immunoglobulins serve as receptors which, upon binding of a specific antigen, trigger the clonal expansion and differentiation of B lymphocytes into immunoglobulins-secreting plasma cells. Secreted immunoglobulins mediate the effector phase of humoral immunity, which results in the elimination of bound antigens. The antigen binding site is formed by the variable domain of one heavy chain, together with that of its associated light chain. Thus, each immunoglobulin has two antigen binding sites with remarkable affinity for a particular antigen. The variable domains are assembled by a process called V-(D)-J rearrangement and can then be subjected to somatic hypermutations which, after exposure to antigen and selection, allow affinity maturation for a particular antigen. In Homo sapiens (Human), this protein is Immunoglobulin heavy variable 2-26.